The sequence spans 215 residues: RNA pyrophosphohydrolase (215 aa).

Residues Gly6 to Thr149 form the Nudix hydrolase domain. The Nudix box motif lies at Gly38 to Gly59.

It belongs to the Nudix hydrolase family. RppH subfamily. A divalent metal cation is required as a cofactor.

Its function is as follows. Accelerates the degradation of transcripts by removing pyrophosphate from the 5'-end of triphosphorylated RNA, leading to a more labile monophosphorylated state that can stimulate subsequent ribonuclease cleavage. This chain is RNA pyrophosphohydrolase, found in Burkholderia multivorans (strain ATCC 17616 / 249).